The primary structure comprises 748 residues: Cytosolic phospholipase A2 (748 aa).

The phospholipid binding stretch occupies residues 1–178; the sequence is MSFIDPYQHI…MKSFLGEENS (178 aa). The C2 domain occupies 6-124; that stretch reads PYQHIVVEHQ…GEKKEVQLTF (119 aa). The Ca(2+) site is built by aspartate 40, threonine 41, aspartate 43, asparagine 65, aspartate 93, alanine 94, and asparagine 95. Positions 138–740 constitute a PLA2c domain; it reads VCSSTDLRFS…SSVEARRFFN (603 aa). The active-site Nucleophile is serine 228. A disordered region spans residues 431-459; the sequence is SNDSSDSEDESQHPKGTENSEANEEYQNS. Residues 449–459 show a composition bias toward polar residues; that stretch reads NSEANEEYQNS. Serine 505 carries the phosphoserine; by MAPK modification. The Proton acceptor role is filled by aspartate 549.

In terms of processing, activated by phosphorylation on a serine residue.

Its subcellular location is the cytoplasm. It is found in the cytoplasmic vesicle. The catalysed reaction is a 1,2-diacyl-sn-glycero-3-phosphocholine + H2O = a 1-acyl-sn-glycero-3-phosphocholine + a fatty acid + H(+). The enzyme catalyses a 1-acyl-sn-glycero-3-phosphocholine + H2O = sn-glycerol 3-phosphocholine + a fatty acid + H(+). With respect to regulation, stimulated by agonists such as ATP, EGF, thrombin and bradykinin as well as by cytosolic Ca(2+). In terms of biological role, selectively hydrolyzes arachidonyl phospholipids in the sn-2 position releasing arachidonic acid. Together with its lysophospholipid activity, it is implicated in the initiation of the inflammatory response. This Gallus gallus (Chicken) protein is Cytosolic phospholipase A2 (PLA2G4A).